A 159-amino-acid chain; its full sequence is Testis-specific XK-related protein, Y-linked (159 aa).

Helical transmembrane passes span 1–21 (MFIFNSIADDIFPLISCVGAI), 45–65 (IYLMIWHSLVIISPVVTLAFF), and 72–92 (GSLHFLLIIYFVLLLTPWLEF).

The protein belongs to the XK family. Testis specific.

It is found in the membrane. The sequence is that of Testis-specific XK-related protein, Y-linked (XKRY) from Homo sapiens (Human).